Here is a 327-residue protein sequence, read N- to C-terminus: tRNA uridine(34) hydroxylase (327 aa).

The Rhodanese domain occupies 130-224; the sequence is LDEDTVVLDT…YGKDPEVRGE (95 aa). Catalysis depends on Cys184, which acts as the Cysteine persulfide intermediate.

The protein belongs to the TrhO family.

The enzyme catalyses uridine(34) in tRNA + AH2 + O2 = 5-hydroxyuridine(34) in tRNA + A + H2O. Catalyzes oxygen-dependent 5-hydroxyuridine (ho5U) modification at position 34 in tRNAs. This Streptococcus suis (strain 98HAH33) protein is tRNA uridine(34) hydroxylase.